The chain runs to 119 residues: Large ribosomal subunit protein uL22 (119 aa).

The protein belongs to the universal ribosomal protein uL22 family. As to quaternary structure, part of the 50S ribosomal subunit.

This protein binds specifically to 23S rRNA; its binding is stimulated by other ribosomal proteins, e.g. L4, L17, and L20. It is important during the early stages of 50S assembly. It makes multiple contacts with different domains of the 23S rRNA in the assembled 50S subunit and ribosome. In terms of biological role, the globular domain of the protein is located near the polypeptide exit tunnel on the outside of the subunit, while an extended beta-hairpin is found that lines the wall of the exit tunnel in the center of the 70S ribosome. The protein is Large ribosomal subunit protein uL22 of Chlorobium luteolum (strain DSM 273 / BCRC 81028 / 2530) (Pelodictyon luteolum).